A 905-amino-acid polypeptide reads, in one-letter code: DNA mismatch repair protein MutS (905 aa).

The segment at 389–410 (ERPANPEGTYPTDAETSGDTLP) is disordered. An ATP-binding site is contributed by 638-645 (GPNMAGKS). Residues 826–847 (RDAARGTNSAPSRQTLPGLDLP) form a disordered region. Residues 831 to 840 (GTNSAPSRQT) are compositionally biased toward polar residues.

It belongs to the DNA mismatch repair MutS family.

Its function is as follows. This protein is involved in the repair of mismatches in DNA. It is possible that it carries out the mismatch recognition step. This protein has a weak ATPase activity. This is DNA mismatch repair protein MutS from Nitratidesulfovibrio vulgaris (strain ATCC 29579 / DSM 644 / CCUG 34227 / NCIMB 8303 / VKM B-1760 / Hildenborough) (Desulfovibrio vulgaris).